The chain runs to 238 residues: MSQSLIVALDFPGKQDVEQFLRHFEGEELFVKVGMELFYKEGPAIITYLKEKGHKIFLDLKLHDIPNTVKSAMRSLASLDVDMVNVHAAGGSSMMKAAIEGLEEGKQEGKERPICIAVTQLTSTSETMMKKEIGIEKTLEEAVAHYAKLTKESGLDGVVCSTLEVPKLREVCGNEFVTVTPGIRLASDDVNDQVRVATPKRARELGSSYIVVGRSITKAENPLEAYKTVKQQWEGVTV.

Substrate contacts are provided by residues D10, K32, 59–68, T122, R184, Q193, G213, and R214; that span reads DLKLHDIPNT. Catalysis depends on K61, which acts as the Proton donor.

This sequence belongs to the OMP decarboxylase family. Type 1 subfamily. In terms of assembly, homodimer.

It carries out the reaction orotidine 5'-phosphate + H(+) = UMP + CO2. It functions in the pathway pyrimidine metabolism; UMP biosynthesis via de novo pathway; UMP from orotate: step 2/2. Functionally, catalyzes the decarboxylation of orotidine 5'-monophosphate (OMP) to uridine 5'-monophosphate (UMP). The protein is Orotidine 5'-phosphate decarboxylase of Bacillus thuringiensis subsp. konkukian (strain 97-27).